We begin with the raw amino-acid sequence, 414 residues long: COUP transcription factor 2 (414 aa).

Residues 1-72 (MAMVVSTWRD…PGGPGSDKQQ (72 aa)) are disordered. Pro residues predominate over residues 27–37 (PPVPGPPPGAP). Residues 38–57 (HTPQTPGQGGPASTPAQTAA) show a composition bias toward low complexity. A Phosphothreonine modification is found at T51. A compositionally biased stretch (gly residues) spans 58-67 (GGQGGPGGPG). Positions 76-151 (HIECVVCGDK…VGMRREAVQR (76 aa)) form a DNA-binding region, nuclear receptor. NR C4-type zinc fingers lie at residues 79-99 (CVVCGDKSSGKHYGQFTCEGC) and 115-139 (CRANRNCPIDQHHRNQCQYCRLKKC). Residues 117–414 (ANRNCPIDQH…SFNWPYMAIQ (298 aa)) form an interaction with ZFPM2 region. Residues 177–403 (YLSGYISLLL…TLIRDMLLSG (227 aa)) form the NR LBD domain. Residues 337–414 (LQEKSQCALE…SFNWPYMAIQ (78 aa)) form an important for dimerization region.

Belongs to the nuclear hormone receptor family. NR2 subfamily. In terms of assembly, interacts with SQSTM1. Binds DNA as a dimer; homodimer or heterodimer with NR2F6. Interacts with NCOA1, NCOA2, NCOA3 and PPARGC1A. Interacts with ZFPM2.

It localises to the nucleus. Its function is as follows. Ligand-activated transcription factor. Activated by high concentrations of 9-cis-retinoic acid and all-trans-retinoic acid, but not by dexamethasone, cortisol or progesterone (in vitro). Regulation of the apolipoprotein A-I gene transcription. Binds to DNA site A. May be required to establish ovary identity during early gonad development. In Bos taurus (Bovine), this protein is COUP transcription factor 2 (NR2F2).